A 412-amino-acid polypeptide reads, in one-letter code: Glutamate-pyruvate aminotransferase AlaC (412 aa).

Lys244 bears the N6-(pyridoxal phosphate)lysine mark.

This sequence belongs to the class-I pyridoxal-phosphate-dependent aminotransferase family. In terms of assembly, homodimer. It depends on pyridoxal 5'-phosphate as a cofactor.

It localises to the cytoplasm. It carries out the reaction L-alanine + 2-oxoglutarate = pyruvate + L-glutamate. The protein operates within amino-acid biosynthesis; L-alanine biosynthesis. Its function is as follows. Involved in the biosynthesis of alanine. Catalyzes the transamination of pyruvate by glutamate, leading to the formation of L-alanine and 2-oxoglutarate. Is also able to catalyze the reverse reaction. The chain is Glutamate-pyruvate aminotransferase AlaC from Escherichia coli (strain K12).